The primary structure comprises 31 residues: Cytochrome b6-f complex subunit 6 (31 aa).

Residues 4 to 24 (ITSYFGFLLAVLIITSSLFIG) traverse the membrane as a helical segment.

The protein belongs to the PetL family. As to quaternary structure, the 4 large subunits of the cytochrome b6-f complex are cytochrome b6, subunit IV (17 kDa polypeptide, PetD), cytochrome f and the Rieske protein, while the 4 small subunits are PetG, PetL, PetM and PetN. The complex functions as a dimer.

The protein localises to the plastid. It localises to the chloroplast thylakoid membrane. In terms of biological role, component of the cytochrome b6-f complex, which mediates electron transfer between photosystem II (PSII) and photosystem I (PSI), cyclic electron flow around PSI, and state transitions. PetL is important for photoautotrophic growth as well as for electron transfer efficiency and stability of the cytochrome b6-f complex. The sequence is that of Cytochrome b6-f complex subunit 6 from Phaseolus vulgaris (Kidney bean).